A 141-amino-acid polypeptide reads, in one-letter code: Hemoglobin subunit alpha (141 aa).

A Globin domain is found at 1-141 (VLSAKDKTNI…VSTVLTSKYR (141 aa)). Serine 3 is subject to Phosphoserine. Lysine 7 is subject to N6-succinyllysine. Threonine 8 carries the post-translational modification Phosphothreonine. Position 16 is an N6-acetyllysine; alternate (lysine 16). Residue lysine 16 is modified to N6-succinyllysine; alternate. Residue tyrosine 24 is modified to Phosphotyrosine. Lysine 40 is modified (N6-succinyllysine). A Phosphoserine modification is found at serine 49. Histidine 58 serves as a coordination point for O2. Histidine 87 is a binding site for heme b. A Phosphoserine modification is found at serine 102. At threonine 108 the chain carries Phosphothreonine. Residues serine 124 and serine 131 each carry the phosphoserine modification. Residues threonine 134 and threonine 137 each carry the phosphothreonine modification. Serine 138 carries the phosphoserine modification.

This sequence belongs to the globin family. Heterotetramer of two alpha chains and two beta chains. As to expression, red blood cells.

Involved in oxygen transport from the lung to the various peripheral tissues. Functionally, hemopressin acts as an antagonist peptide of the cannabinoid receptor CNR1. Hemopressin-binding efficiently blocks cannabinoid receptor CNR1 and subsequent signaling. In Mesocricetus auratus (Golden hamster), this protein is Hemoglobin subunit alpha (HBA).